The following is a 277-amino-acid chain: Nudix hydrolase 10 (277 aa).

One can recognise a Nudix hydrolase domain in the interval Trp-97–His-235. The Nudix box signature appears at Gly-142 to Gly-163. Glu-157 and Glu-161 together coordinate Mg(2+).

Belongs to the Nudix hydrolase family. Mg(2+) is required as a cofactor. The cofactor is Mn(2+). As to expression, expressed in roots, stems and, at lower level, leaves.

It carries out the reaction ADP-D-ribose + H2O = D-ribose 5-phosphate + AMP + 2 H(+). The enzyme catalyses NAD(+) + H2O = beta-nicotinamide D-ribonucleotide + AMP + 2 H(+). It catalyses the reaction NADH + H2O = reduced beta-nicotinamide D-ribonucleotide + AMP + 2 H(+). In terms of biological role, may mediate the hydrolysis of some nucleoside diphosphate derivatives. In vitro, uses both ADP-ribose and NADH as substrates; however the relevance of such substrates in vivo is unclear. The polypeptide is Nudix hydrolase 10 (NUDT10) (Arabidopsis thaliana (Mouse-ear cress)).